The chain runs to 219 residues: Probable GTP-binding protein EngB (219 aa).

The 184-residue stretch at 24–207 (VQPEIAFAGR…HELIESWLRP (184 aa)) folds into the EngB-type G domain. GTP-binding positions include 32 to 39 (GRSNAGKS), 59 to 63 (GRTQH), 81 to 84 (DLPG), 148 to 151 (TKCD), and 186 to 188 (FSA). Positions 39 and 61 each coordinate Mg(2+).

This sequence belongs to the TRAFAC class TrmE-Era-EngA-EngB-Septin-like GTPase superfamily. EngB GTPase family. Mg(2+) serves as cofactor.

In terms of biological role, necessary for normal cell division and for the maintenance of normal septation. The sequence is that of Probable GTP-binding protein EngB from Burkholderia cenocepacia (strain HI2424).